The sequence spans 455 residues: Retinoic acid receptor beta (455 aa).

The tract at residues 1–87 is modulating; it reads MTTSSRTCPV…PLPPPRVYKP (87 aa). The interval 44–78 is disordered; the sequence is LQSHPPTSGCSTPSPATVETQSTSSEELVPSPPSP. Positions 47–66 are enriched in polar residues; that stretch reads HPPTSGCSTPSPATVETQST. NR C4-type zinc fingers lie at residues 88-108 and 124-148; these read CFVCQDKSSGYHYGVSACEGC and CHRDKNCVINKVTRNRCQYCRLQKC. The nuclear receptor DNA-binding region spans 88 to 153; it reads CFVCQDKSSG…RLQKCFEVGM (66 aa). The hinge stretch occupies residues 154–182; that stretch reads SKESVRNDRNKKKKEPTKQESTENYEMTA. The NR LBD domain maps to 183–417; the sequence is ELDDLTEKIR…PLIQEMLENS (235 aa). The segment at 416-455 is disordered; it reads NSEGHEPLTPTSNGNTAEHSPSISPSSVDNSSVSQSPMVQ. Over residues 424 to 434 the composition is skewed to polar residues; sequence TPTSNGNTAEH. A compositionally biased stretch (low complexity) spans 435 to 455; it reads SPSISPSSVDNSSVSQSPMVQ.

It belongs to the nuclear hormone receptor family. NR1 subfamily. Heterodimer; with a RXR molecule. Binds DNA preferentially as a RAR/RXR heterodimer.

Its subcellular location is the nucleus. In terms of biological role, receptor for retinoic acid. Retinoic acid receptors bind as heterodimers to their target response elements in response to their ligands, all-trans or 9-cis retinoic acid, and regulate gene expression in various biological processes. The RAR/RXR heterodimers bind to the retinoic acid response elements (RARE) composed of tandem 5'-AGGTCA-3' sites known as DR1-DR5. Required for limb and craniofacial development. In Gallus gallus (Chicken), this protein is Retinoic acid receptor beta (RARB).